A 29-amino-acid polypeptide reads, in one-letter code: Glucagon (29 aa).

Belongs to the glucagon family.

The protein resides in the secreted. Glucagon plays a key role in glucose metabolism and homeostasis. Regulates blood glucose by increasing gluconeogenesis and decreasing glycolysis. In Polypterus senegalus (Senegal bichir), this protein is Glucagon (gcg).